Here is a 129-residue protein sequence, read N- to C-terminus: Small ribosomal subunit protein uS11 (129 aa).

Belongs to the universal ribosomal protein uS11 family. As to quaternary structure, part of the 30S ribosomal subunit. Interacts with proteins S7 and S18. Binds to IF-3.

In terms of biological role, located on the platform of the 30S subunit, it bridges several disparate RNA helices of the 16S rRNA. Forms part of the Shine-Dalgarno cleft in the 70S ribosome. This Azorhizobium caulinodans (strain ATCC 43989 / DSM 5975 / JCM 20966 / LMG 6465 / NBRC 14845 / NCIMB 13405 / ORS 571) protein is Small ribosomal subunit protein uS11.